Reading from the N-terminus, the 207-residue chain is dITP/XTP pyrophosphatase (207 aa).

Residue 7–12 participates in substrate binding; it reads SNNAKK. The Proton acceptor role is filled by Asp-72. Position 72 (Asp-72) interacts with Mg(2+). Substrate is bound by residues Ser-73, 155–158, Lys-183, and 188–189; these read FGYD and HR.

The protein belongs to the HAM1 NTPase family. Homodimer. Requires Mg(2+) as cofactor.

The enzyme catalyses XTP + H2O = XMP + diphosphate + H(+). It carries out the reaction dITP + H2O = dIMP + diphosphate + H(+). The catalysed reaction is ITP + H2O = IMP + diphosphate + H(+). Its function is as follows. Pyrophosphatase that catalyzes the hydrolysis of nucleoside triphosphates to their monophosphate derivatives, with a high preference for the non-canonical purine nucleotides XTP (xanthosine triphosphate), dITP (deoxyinosine triphosphate) and ITP. Seems to function as a house-cleaning enzyme that removes non-canonical purine nucleotides from the nucleotide pool, thus preventing their incorporation into DNA/RNA and avoiding chromosomal lesions. This is dITP/XTP pyrophosphatase from Corynebacterium diphtheriae (strain ATCC 700971 / NCTC 13129 / Biotype gravis).